Consider the following 775-residue polypeptide: Semaphorin-3E (775 aa).

A signal peptide spans 1–25 (MASAGHIITLLLWGYLLELWTGGHT). The 485-residue stretch at 32-516 (RLRLSHKELL…SASAVAQVRF (485 aa)) folds into the Sema domain. Asparagine 44 carries N-linked (GlcNAc...) asparagine glycosylation. Cysteine 105 and cysteine 115 are disulfide-bonded. N-linked (GlcNAc...) asparagine glycosylation is present at asparagine 126. 4 disulfides stabilise this stretch: cysteine 133/cysteine 142, cysteine 270/cysteine 382, cysteine 294/cysteine 342, and cysteine 519/cysteine 537. Residue asparagine 330 is glycosylated (N-linked (GlcNAc...) asparagine). Positions 581–669 (ALDKTEEHLA…SFVHTVRKIT (89 aa)) constitute an Ig-like C2-type domain. N-linked (GlcNAc...) asparagine glycosylation is found at asparagine 595 and asparagine 596. An intrachain disulfide couples cysteine 654 to cysteine 729. The tract at residues 742–775 (LKMSPSKWKYANPQEKKLRSKPEHYRLPRHTLDS) is disordered. Residues 755-775 (QEKKLRSKPEHYRLPRHTLDS) show a composition bias toward basic and acidic residues.

This sequence belongs to the semaphorin family. Interacts with PLXND1.

The protein localises to the secreted. Functionally, plays an important role in signaling via the cell surface receptor PLXND1. Mediates reorganization of the actin cytoskeleton, leading to the retraction of cell projections. Promotes focal adhesion disassembly and inhibits adhesion of endothelial cells to the extracellular matrix. Regulates angiogenesis, both during embryogenesis and after birth. Can down-regulate sprouting angiogenesis. Required for normal vascular patterning during embryogenesis. Plays an important role in ensuring the specificity of synapse formation. This Homo sapiens (Human) protein is Semaphorin-3E (SEMA3E).